The primary structure comprises 688 residues: Sodium channel and clathrin linker 1 (688 aa).

Ala-2 carries the N-acetylalanine modification. The stretch at Leu-59–Thr-673 forms a coiled coil. Ser-681 carries the phosphoserine modification.

Interacts with SCN10A and clathrin. Identified in a complex containing SCN10A, clathrin and SCLT1. Detected in small neurons in dorsal root ganglia. Detected in C-type fibers of sciatic nerve (at protein level).

It is found in the cytoplasm. The protein resides in the cytoskeleton. Its subcellular location is the microtubule organizing center. The protein localises to the centrosome. It localises to the centriole. Functionally, adapter protein that links SCN10A to clathrin. Regulates SCN10A channel activity, possibly by promoting channel internalization. In Rattus norvegicus (Rat), this protein is Sodium channel and clathrin linker 1 (Sclt1).